Consider the following 331-residue polypeptide: Cytosolic sulfotransferase 1 (331 aa).

Residue 74–79 (KSGTTW) coordinates 3'-phosphoadenylyl sulfate. Residue H143 is the Proton acceptor of the active site. Residues R165, S173, Y231, and 297–299 (RKG) each bind 3'-phosphoadenylyl sulfate.

This sequence belongs to the sulfotransferase 1 family.

The protein resides in the cytoplasm. Its function is as follows. Sulfotransferase that utilizes 3'-phospho-5'-adenylyl sulfate (PAPS) as sulfonate donor. In Arabidopsis thaliana (Mouse-ear cress), this protein is Cytosolic sulfotransferase 1 (SOT1).